Reading from the N-terminus, the 804-residue chain is Endoplasmin (804 aa).

The N-terminal stretch at 1–21 (MRALWVLGLCCVLLTFGSVRA) is a signal peptide. The SRT pseudosubstrate motif motif lies at 42-44 (SRT). An N-linked (GlcNAc...) asparagine glycan is attached at Asn62. Ser64 is modified (phosphoserine). N-linked (GlcNAc...) asparagine glycosylation occurs at Asn107. Residues Asn107, Asp149, and Asn162 each contribute to the ATP site. At Lys168 the chain carries N6-(2-hydroxyisobutyryl)lysine. Ser172 carries the post-translational modification Phosphoserine. Phe199 is a binding site for ATP. The N-linked (GlcNAc...) asparagine glycan is linked to Asn217. The segment at 288-323 (TVEEPMEEEEAAKEEKEESDDEAAVEEEEEEKKPKT) is disordered. Over residues 289-317 (VEEPMEEEEAAKEEKEESDDEAAVEEEEE) the composition is skewed to acidic residues. A phosphoserine mark is found at Ser306 and Ser403. Lys404 is subject to N6-succinyllysine. Asn445 is a glycosylation site (N-linked (GlcNAc...) asparagine). Residue Ser447 is modified to Phosphoserine. Lys479 carries the post-translational modification N6-acetyllysine. Asn481 and Asn502 each carry an N-linked (GlcNAc...) asparagine glycan. Lys633 carries the post-translational modification N6-succinyllysine. The disordered stretch occupies residues 750 to 804 (DPDAKVEDEPEEEPEETTEDTTEDTEQDEDEEMDVGTDEEEQETAKESTAEKDEL). Acidic residues predominate over residues 757–791 (DEPEEEPEETTEDTTEDTEQDEDEEMDVGTDEEEQ). Position 786 is a phosphothreonine (Thr786). Basic and acidic residues predominate over residues 792 to 804 (ETAKESTAEKDEL). A Prevents secretion from ER motif is present at residues 801-804 (KDEL).

The protein belongs to the heat shock protein 90 family. Homodimer; disulfide-linked. Component of an EIF2 complex at least composed of CELF1/CUGBP1, CALR, CALR3, EIF2S1, EIF2S2, HSP90B1 and HSPA5. Part of a large chaperone multiprotein complex comprising DNAJB11, HSP90B1, HSPA5, HYOU, PDIA2, PDIA4, PDIA6, PPIB, SDF2L1, UGGT1 and very small amounts of ERP29, but not, or at very low levels, CALR nor CANX. Interacts with AIMP1; regulates its retention in the endoplasmic reticulum. Hyperglycosylated form interacts with OS9; promoting its degradation by the endoplasmic reticulum associated degradation (ERAD). Interacts with CNPY3. This interaction is disrupted in the presence of ATP. Interacts with TLR4 and TLR9, but not with TLR3. Interacts with MZB1 in a calcium-dependent manner. Interacts with METTL23. Interacts with IL1B; the interaction facilitates cargo translocation into the ERGIC. Interacts with EIF2AK3. Post-translationally, phosphorylated by CK2. In terms of processing, N-glycosylated cotranslationally at Asn-217 by STT3A-containing OST-A complex: this glycosylation is constitutive. In response to various stress, 5 additional facultative sites (Asn-62, Asn-107, Asn-445, Asn-481 and Asn-502) can be glycosylated post-translationally by STT3B-containing OST-B complex, leading to a hyperglycosylated form that is degraded by the ER-associated degradation (ERAD) pathway. In normal conditions, the OST-A complex together with CCDC134 prevent glycosylation at facultative sites during protein folding, thereby preventing hyperglycosylation. Mechanistically, nascent HSP90B1 is tethered during translation to a specialized CCDC134-containing translocon that forms a microenvironment for its folding, in which STT3A associates with the SRT pseudosubstrate motif, and prevents access to facultative glycosylation sites until folding is completed, rendering its facultative sites inaccessible to the OST-B complex.

Its subcellular location is the endoplasmic reticulum lumen. The protein localises to the sarcoplasmic reticulum lumen. It is found in the melanosome. The catalysed reaction is ATP + H2O = ADP + phosphate + H(+). ATP-dependent chaperone involved in the processing of proteins in the endoplasmic reticulum, regulating their transport. Together with MESD, acts as a modulator of the Wnt pathway by promoting the folding of LRP6, a coreceptor of the canonical Wnt pathway. When associated with CNPY3, required for proper folding of Toll-like receptors. Promotes folding and trafficking of TLR4 to the cell surface. May participate in the unfolding of cytosolic leaderless cargos (lacking the secretion signal sequence) such as the interleukin 1/IL-1 to facilitate their translocation into the ERGIC (endoplasmic reticulum-Golgi intermediate compartment) and secretion; the translocation process is mediated by the cargo receptor TMED10. This chain is Endoplasmin (HSP90B1), found in Macaca fascicularis (Crab-eating macaque).